A 125-amino-acid chain; its full sequence is Small ribosomal subunit protein eS8 (125 aa).

The disordered stretch occupies residues methionine 1 to histidine 35.

This sequence belongs to the eukaryotic ribosomal protein eS8 family. Part of the 30S ribosomal subunit.

This is Small ribosomal subunit protein eS8 from Methanoculleus marisnigri (strain ATCC 35101 / DSM 1498 / JR1).